Reading from the N-terminus, the 245-residue chain is 3-deoxy-manno-octulosonate cytidylyltransferase (245 aa).

This sequence belongs to the KdsB family.

It localises to the cytoplasm. It catalyses the reaction 3-deoxy-alpha-D-manno-oct-2-ulosonate + CTP = CMP-3-deoxy-beta-D-manno-octulosonate + diphosphate. Its pathway is nucleotide-sugar biosynthesis; CMP-3-deoxy-D-manno-octulosonate biosynthesis; CMP-3-deoxy-D-manno-octulosonate from 3-deoxy-D-manno-octulosonate and CTP: step 1/1. The protein operates within bacterial outer membrane biogenesis; lipopolysaccharide biosynthesis. Its function is as follows. Activates KDO (a required 8-carbon sugar) for incorporation into bacterial lipopolysaccharide in Gram-negative bacteria. The polypeptide is 3-deoxy-manno-octulosonate cytidylyltransferase (Acaryochloris marina (strain MBIC 11017)).